The following is a 496-amino-acid chain: Putative ammonium transporter 1 member 5 (496 aa).

11 helical membrane-spanning segments follow: residues 50–70 (LLFS…LCAG), 85–105 (VLDA…FAFG), 131–151 (FFLY…GSIA), 156–176 (FVAY…VVSH), 202–222 (FAGS…GALI), 246–266 (LVVL…PGSF), 284–306 (GIGR…TLFG), 314–334 (WNVT…TAGC), 336–356 (VVDP…LIGC), 369–389 (LEAA…VGLF), and 422–442 (LVQI…LFFI). Serine 485 bears the Phosphoserine mark.

The protein belongs to the ammonia transporter channel (TC 1.A.11.2) family.

It is found in the membrane. Involved in ammonium transport. The sequence is that of Putative ammonium transporter 1 member 5 (AMT1-5) from Arabidopsis thaliana (Mouse-ear cress).